Reading from the N-terminus, the 398-residue chain is GATA transcription factor 21 (398 aa).

The disordered stretch occupies residues 20-51 (QPFFYPLGSSSSLHHHHHHHHHQVPSNSSSSS). Positions 32–42 (LHHHHHHHHHQ) are enriched in basic residues. The Nuclear localization signal motif lies at 109–116 (PKKETRLK). Positions 122–144 (KDHEDQPHPLHQNPTKPDSDSDK) are disordered. A GATA-type zinc finger spans residues 226 to 280 (NGVIRVCSDCNTTKTPLWRSGPRGPKSLCNACGIRQRKARRAAMAAAAAAGDQEV). The disordered stretch occupies residues 289 to 353 (LPLKKKLQNK…KSTTSSNSSI (65 aa)). Over residues 291–302 (LKKKLQNKKKRS) the composition is skewed to basic residues. The span at 343 to 353 (SKSTTSSNSSI) shows a compositional bias: low complexity.

This sequence belongs to the type IV zinc-finger family. Class B subfamily. In terms of assembly, interacts with SNL1. Forms heterodimers with GATA18. In terms of tissue distribution, expressed predominantly in leaves, and barely in stems, flowers and siliques.

The protein localises to the nucleus. Transcriptional regulator that specifically binds 5'-GATA-3' or 5'-GAT-3' motifs within gene promoters. Involved in the modulation of chloroplast development, growth and division in a cytokinin-dependent manner. Repressor of the gibberellic acid (GA) signaling pathway that represses flowering and modulates greening, in a SOC1-dependent manner. Prevents the accumulation of SOC1 during flowering. Promotes chlorophyll biosynthesis throughout the plant, by regulating chlorophyll biosynthetic genes (e.g. HEMA1 and GUN4) and chloroplast localized glutamate synthase (e.g. GLU1). Involved in the regulation of sugar-sensing genes (e.g. HXK1, HXK2, STP13 and PLT6). Regulator of germination, senescence, elongation growth and flowering time. Also influences leaf starch content. This is GATA transcription factor 21 from Arabidopsis thaliana (Mouse-ear cress).